The following is a 260-amino-acid chain: Flap endonuclease Xni (260 aa).

D104 contributes to the Mg(2+) binding site. In terms of domain architecture, 5'-3' exonuclease spans 160 to 249; sequence VSPQQLTDYW…LNGNLQQLRL (90 aa). K(+)-binding residues include L171, A172, P180, V182, and I185. The segment at 184-189 is interaction with DNA; it reads GIGPKS.

Belongs to the Xni family. It depends on Mg(2+) as a cofactor. Requires K(+) as cofactor.

In terms of biological role, has flap endonuclease activity. During DNA replication, flap endonucleases cleave the 5'-overhanging flap structure that is generated by displacement synthesis when DNA polymerase encounters the 5'-end of a downstream Okazaki fragment. This chain is Flap endonuclease Xni, found in Pectobacterium carotovorum subsp. carotovorum (strain PC1).